The following is a 303-amino-acid chain: uncharacterized protein (303 aa).

This is an uncharacterized protein from Magallana gigas (Pacific oyster).